We begin with the raw amino-acid sequence, 394 residues long: Growth-regulating factor 4 (394 aa).

The region spanning 64-99 (PFTAAQYEELEQQALIYKYLVAGVPVPPDLVLPIRR) is the QLQ domain. The WRC domain maps to 125–169 (DPEPGRCRRTDGKKWRCSKEAAPDSKYCERHMHRGRNRSRKPVET). Short sequence motifs (bipartite nuclear localization signal) lie at residues 130 to 140 (RCRRTDGKKWR) and 158 to 165 (RGRNRSRK). The segment at 156-180 (MHRGRNRSRKPVETQLVAQSQPPSS) is disordered. Over residues 170 to 180 (QLVAQSQPPSS) the composition is skewed to low complexity.

This sequence belongs to the GRF family. Interacts with GIF1. Interacts with GSK2. Expressed in stems. Expressed in panicles.

It localises to the nucleus. With respect to regulation, transactivation activity is repressed by GSK2. Transcription activator that plays a role in the regulation of meristematic function in leaves, stems and inflorescences. Transcription activator that plays a regulatory role in grain development. Positively regulates grain size by promoting cell division and expansion, leading to increased grain length and width. Positively regulates the expression of genes promoting cell proliferation. Activates the expression of expansin genes to promote cell expansion and grain size. May promote grain size by activating brassinosteroid responses. Component of a network formed by the microRNA396 (miRNA396), the GRFs and their interacting factors (GIFs) acting in the regulation of meristem function, at least partially through the control of cell proliferation. Component of the miRNA396c-GRF4-GIF1 regulatory module that plays an important role in grain size determination. This Oryza sativa subsp. japonica (Rice) protein is Growth-regulating factor 4.